The sequence spans 194 residues: MKIKLIVGLANPGAEYAATRHNAGAWYVELLAERYRQTLKEESKFYGYTGRLTLGGQDVRLLVPTTFMNLSGKAVAAMATFYRIAPEDILVAHDELDLLPGSARLKLGGGHGGHNGLKDIISRLGNNPQFHRLRIGISHPGDKNQVVGFVLGKPPTAERQLIDSAIDEAVRCTEILVTQDAVKAMNRLHAYRPG.

Tyrosine 16 is a tRNA binding site. Catalysis depends on histidine 21, which acts as the Proton acceptor. TRNA contacts are provided by phenylalanine 67, asparagine 69, and asparagine 115.

It belongs to the PTH family. As to quaternary structure, monomer.

It is found in the cytoplasm. It catalyses the reaction an N-acyl-L-alpha-aminoacyl-tRNA + H2O = an N-acyl-L-amino acid + a tRNA + H(+). Hydrolyzes ribosome-free peptidyl-tRNAs (with 1 or more amino acids incorporated), which drop off the ribosome during protein synthesis, or as a result of ribosome stalling. Its function is as follows. Catalyzes the release of premature peptidyl moieties from peptidyl-tRNA molecules trapped in stalled 50S ribosomal subunits, and thus maintains levels of free tRNAs and 50S ribosomes. In Sodalis glossinidius (strain morsitans), this protein is Peptidyl-tRNA hydrolase.